A 678-amino-acid polypeptide reads, in one-letter code: UvrABC system protein B (678 aa).

A Helicase ATP-binding domain is found at 31–417 (EGLENGLAHQ…KSGGEIIDQV (387 aa)). 44 to 51 (GVTGSGKT) is an ATP binding site. Positions 97–120 (YYDYYQPEAYVPSSDTFIEKDASI) match the Beta-hairpin motif. The region spanning 436–589 (QVDDLLSEAR…QMKYNEARGI (154 aa)) is the Helicase C-terminal domain. The UVR domain occupies 638–673 (QQQIKKLEQQMYKYAQDLEFEKAAAVRDQLQQLREH).

The protein belongs to the UvrB family. As to quaternary structure, forms a heterotetramer with UvrA during the search for lesions. Interacts with UvrC in an incision complex.

It localises to the cytoplasm. Its function is as follows. The UvrABC repair system catalyzes the recognition and processing of DNA lesions. A damage recognition complex composed of 2 UvrA and 2 UvrB subunits scans DNA for abnormalities. Upon binding of the UvrA(2)B(2) complex to a putative damaged site, the DNA wraps around one UvrB monomer. DNA wrap is dependent on ATP binding by UvrB and probably causes local melting of the DNA helix, facilitating insertion of UvrB beta-hairpin between the DNA strands. Then UvrB probes one DNA strand for the presence of a lesion. If a lesion is found the UvrA subunits dissociate and the UvrB-DNA preincision complex is formed. This complex is subsequently bound by UvrC and the second UvrB is released. If no lesion is found, the DNA wraps around the other UvrB subunit that will check the other stand for damage. In Pasteurella multocida (strain Pm70), this protein is UvrABC system protein B.